Reading from the N-terminus, the 139-residue chain is Large ribosomal subunit protein uL16 (139 aa).

It belongs to the universal ribosomal protein uL16 family. As to quaternary structure, part of the 50S ribosomal subunit.

Its function is as follows. Binds 23S rRNA and is also seen to make contacts with the A and possibly P site tRNAs. The polypeptide is Large ribosomal subunit protein uL16 (Gloeothece citriformis (strain PCC 7424) (Cyanothece sp. (strain PCC 7424))).